Reading from the N-terminus, the 320-residue chain is HPr kinase/phosphorylase (320 aa).

Catalysis depends on residues histidine 141 and lysine 162. ATP is bound at residue 156–163; it reads GHSGLGKS. Mg(2+) is bound at residue serine 163. Aspartate 180 (proton acceptor; for phosphorylation activity. Proton donor; for dephosphorylation activity) is an active-site residue. An important for the catalytic mechanism of both phosphorylation and dephosphorylation region spans residues 204-213; it reads LEVRGLGILN. Glutamate 205 is a binding site for Mg(2+). The active site involves arginine 248. The important for the catalytic mechanism of dephosphorylation stretch occupies residues 269-274; sequence PVAVGR.

Belongs to the HPrK/P family. In terms of assembly, homohexamer. The cofactor is Mg(2+).

It carries out the reaction [HPr protein]-L-serine + ATP = [HPr protein]-O-phospho-L-serine + ADP + H(+). The enzyme catalyses [HPr protein]-O-phospho-L-serine + phosphate + H(+) = [HPr protein]-L-serine + diphosphate. In terms of biological role, catalyzes the ATP- as well as the pyrophosphate-dependent phosphorylation of a specific serine residue in HPr, a phosphocarrier protein of the phosphoenolpyruvate-dependent sugar phosphotransferase system (PTS). HprK/P also catalyzes the pyrophosphate-producing, inorganic phosphate-dependent dephosphorylation (phosphorolysis) of seryl-phosphorylated HPr (P-Ser-HPr). The protein is HPr kinase/phosphorylase of Neisseria gonorrhoeae (strain ATCC 700825 / FA 1090).